Consider the following 316-residue polypeptide: Aspartate carbamoyltransferase catalytic subunit (316 aa).

Arg60 and Thr61 together coordinate carbamoyl phosphate. Residue Lys88 coordinates L-aspartate. Arg110, His138, and Gln141 together coordinate carbamoyl phosphate. Residues Arg171 and Arg225 each contribute to the L-aspartate site. Residues Gly266 and Pro267 each coordinate carbamoyl phosphate.

The protein belongs to the aspartate/ornithine carbamoyltransferase superfamily. ATCase family. Heterododecamer (2C3:3R2) of six catalytic PyrB chains organized as two trimers (C3), and six regulatory PyrI chains organized as three dimers (R2).

It catalyses the reaction carbamoyl phosphate + L-aspartate = N-carbamoyl-L-aspartate + phosphate + H(+). It functions in the pathway pyrimidine metabolism; UMP biosynthesis via de novo pathway; (S)-dihydroorotate from bicarbonate: step 2/3. Its function is as follows. Catalyzes the condensation of carbamoyl phosphate and aspartate to form carbamoyl aspartate and inorganic phosphate, the committed step in the de novo pyrimidine nucleotide biosynthesis pathway. The polypeptide is Aspartate carbamoyltransferase catalytic subunit (Rhizorhabdus wittichii (strain DSM 6014 / CCUG 31198 / JCM 15750 / NBRC 105917 / EY 4224 / RW1) (Sphingomonas wittichii)).